Reading from the N-terminus, the 161-residue chain is Nucleotide-binding protein Daci_4781 (161 aa).

This sequence belongs to the YajQ family.

Functionally, nucleotide-binding protein. The chain is Nucleotide-binding protein Daci_4781 from Delftia acidovorans (strain DSM 14801 / SPH-1).